The chain runs to 129 residues: ATP synthase epsilon chain (129 aa).

Belongs to the ATPase epsilon chain family. F-type ATPases have 2 components, CF(1) - the catalytic core - and CF(0) - the membrane proton channel. CF(1) has five subunits: alpha(3), beta(3), gamma(1), delta(1), epsilon(1). CF(0) has three main subunits: a, b and c.

It localises to the cell inner membrane. Its function is as follows. Produces ATP from ADP in the presence of a proton gradient across the membrane. The chain is ATP synthase epsilon chain from Campylobacter curvus (strain 525.92).